The sequence spans 641 residues: RING finger containing E3 ubiquitin-protein ligase WSV403 (641 aa).

The RING-type; atypical zinc finger occupies 329-371; the sequence is CVGCLYDIEDEKRCYKLPCGHFMHTFCLSNKCSKANFRCVKCF.

It catalyses the reaction S-ubiquitinyl-[E2 ubiquitin-conjugating enzyme]-L-cysteine + [acceptor protein]-L-lysine = [E2 ubiquitin-conjugating enzyme]-L-cysteine + N(6)-ubiquitinyl-[acceptor protein]-L-lysine.. Its pathway is protein modification; protein ubiquitination. Functionally, probable E3 ubiquitin-protein ligase which accepts ubiquitin from an E2 ubiquitin-conjugating enzyme in the form of a thioester and then directly transfers the ubiquitin to targeted substrates. The polypeptide is RING finger containing E3 ubiquitin-protein ligase WSV403 (White spot syndrome virus (isolate Shrimp/China/Tongan/1996) (WSSV)).